The primary structure comprises 376 residues: Tetraacyldisaccharide 4'-kinase (376 aa).

51 to 58 (AVGGTGKT) provides a ligand contact to ATP.

It belongs to the LpxK family.

It catalyses the reaction a lipid A disaccharide + ATP = a lipid IVA + ADP + H(+). It participates in glycolipid biosynthesis; lipid IV(A) biosynthesis; lipid IV(A) from (3R)-3-hydroxytetradecanoyl-[acyl-carrier-protein] and UDP-N-acetyl-alpha-D-glucosamine: step 6/6. Functionally, transfers the gamma-phosphate of ATP to the 4'-position of a tetraacyldisaccharide 1-phosphate intermediate (termed DS-1-P) to form tetraacyldisaccharide 1,4'-bis-phosphate (lipid IVA). The polypeptide is Tetraacyldisaccharide 4'-kinase (Bacteroides fragilis (strain YCH46)).